The chain runs to 126 residues: Small ribosomal subunit protein bS6 (126 aa).

The disordered stretch occupies residues 107 to 126 (RDRERGERSERPRDDFAPAA).

This sequence belongs to the bacterial ribosomal protein bS6 family.

Functionally, binds together with bS18 to 16S ribosomal RNA. The sequence is that of Small ribosomal subunit protein bS6 from Caulobacter sp. (strain K31).